The sequence spans 430 residues: Enolase (430 aa).

Gln-162 provides a ligand contact to (2R)-2-phosphoglycerate. Glu-204 (proton donor) is an active-site residue. Mg(2+) contacts are provided by Asp-241, Glu-283, and Asp-310. Lys-335, Arg-364, Ser-365, and Lys-386 together coordinate (2R)-2-phosphoglycerate. Residue Lys-335 is the Proton acceptor of the active site.

The protein belongs to the enolase family. Mg(2+) serves as cofactor.

It is found in the cytoplasm. It localises to the secreted. The protein resides in the cell surface. The enzyme catalyses (2R)-2-phosphoglycerate = phosphoenolpyruvate + H2O. It participates in carbohydrate degradation; glycolysis; pyruvate from D-glyceraldehyde 3-phosphate: step 4/5. Its function is as follows. Catalyzes the reversible conversion of 2-phosphoglycerate (2-PG) into phosphoenolpyruvate (PEP). It is essential for the degradation of carbohydrates via glycolysis. In Mycobacteroides abscessus (strain ATCC 19977 / DSM 44196 / CCUG 20993 / CIP 104536 / JCM 13569 / NCTC 13031 / TMC 1543 / L948) (Mycobacterium abscessus), this protein is Enolase.